The following is a 360-amino-acid chain: Ferredoxin--NADP reductase, leaf isozyme, chloroplastic (360 aa).

A chloroplast-targeting transit peptide spans 1–52 (MAAAVTAAVSLPYSNSTSLPIRTSIVAPERLVFKKVSLNNVSISGRVGTIRA). One can recognise an FAD-binding FR-type domain in the interval 81 to 203 (KEPYVGRCLL…TGPVGKEMLM (123 aa)). Residues 139-142 (RLYS), 160-162 (CVK), Y166, 177-179 (VCS), and T218 each bind FAD. 2 residues coordinate NADP(+): S142 and K162. NADP(+) is bound by residues T218, 250–251 (VP), 280–281 (SR), K290, 319–320 (GL), and E358.

It belongs to the ferredoxin--NADP reductase type 1 family. Monomer. Interacts with TIC62 (via C-terminus). FAD is required as a cofactor.

It is found in the plastid. Its subcellular location is the chloroplast stroma. The protein localises to the chloroplast thylakoid membrane. It carries out the reaction 2 reduced [2Fe-2S]-[ferredoxin] + NADP(+) + H(+) = 2 oxidized [2Fe-2S]-[ferredoxin] + NADPH. It participates in energy metabolism; photosynthesis. Its function is as follows. May play a key role in regulating the relative amounts of cyclic and non-cyclic electron flow to meet the demands of the plant for ATP and reducing power. This chain is Ferredoxin--NADP reductase, leaf isozyme, chloroplastic (PETH), found in Pisum sativum (Garden pea).